Reading from the N-terminus, the 56-residue chain is Small ribosomal subunit protein uS14 (56 aa).

Zn(2+)-binding residues include Cys-21, Cys-24, Cys-39, and Cys-42.

The protein belongs to the universal ribosomal protein uS14 family. Component of the 40S small ribosomal subunit. Requires Zn(2+) as cofactor.

The protein localises to the cytoplasm. Its subcellular location is the cytosol. The protein resides in the rough endoplasmic reticulum. This is Small ribosomal subunit protein uS14 (RpS29) from Lonomia obliqua (Moth).